The chain runs to 44 residues: Large ribosomal subunit protein bL34 (44 aa).

It belongs to the bacterial ribosomal protein bL34 family.

The chain is Large ribosomal subunit protein bL34 from Neorickettsia sennetsu (strain ATCC VR-367 / Miyayama) (Ehrlichia sennetsu).